Consider the following 395-residue polypeptide: Type III polyketide synthase A (395 aa).

63-70 (KLEHLCKT) is a binding site for CoA. Cys172 functions as the Nucleophile in the catalytic mechanism. Residue 224 to 225 (GD) coordinates substrate. CoA is bound by residues Leu274, 314-317 (GGPA), and Ala317.

This sequence belongs to the thiolase-like superfamily. Chalcone/stilbene synthases family. As to quaternary structure, homodimer. Interacts with 4CLL1/ACOS5 and TKPR1. As to expression, expressed in flowers and flower buds (at protein level), and, at very low levels, in roots, seedlings, leaves and stems. Mostly confined to anther tapetal cells.

It is found in the endoplasmic reticulum. It participates in secondary metabolite biosynthesis; flavonoid biosynthesis. Its function is as follows. Plant type III polyketide synthases (PKSs) that catalyzes the condensation of malonyl-CoA units with various CoA ester starter molecules to generate a diverse array of natural products including long-chain alkyl alpha-pyrones. Accepts up to C(20) chain-length fatty acyl CoAs as starter substrates, and carries out sequential condensations with malonyl-CoA to produce triketide and tetraketide alpha-pyrones, potential sporopollenin precursors. Favorite substrates for are midchain- and v-hydroxylated fatty acyl-CoAs (e.g. 12-hydroxyoctadecanoyl-CoA and 16-hydroxyhexadecanoyl-CoA). Required for pollen development and sporopollenin biosynthesis, the major constituent of exine in the outer pollen wall. In vitro, can use 4-coumaroyl-coenzyme A as substrate to produce bis-noryangonin and fatty acyl-coenzyme A as substrate to produce medium-chain alkyl pyrones. May play a role in both the synthesis of pollen fatty acids and phenolics found in exine. The polypeptide is Type III polyketide synthase A (Arabidopsis thaliana (Mouse-ear cress)).